A 176-amino-acid chain; its full sequence is Isopentenyl-diphosphate Delta-isomerase (176 aa).

Mn(2+) contacts are provided by H24 and H30. The 133-residue stretch at 28-160 (LLHRAFSIFV…PSAFTVWFHC (133 aa)) folds into the Nudix hydrolase domain. C65 is a catalytic residue. H67 provides a ligand contact to Mn(2+). Mg(2+) is bound at residue E85. E110 and E112 together coordinate Mn(2+). Residue E112 is part of the active site.

The protein belongs to the IPP isomerase type 1 family. The cofactor is Mg(2+). Requires Mn(2+) as cofactor.

It is found in the cytoplasm. It catalyses the reaction isopentenyl diphosphate = dimethylallyl diphosphate. It participates in isoprenoid biosynthesis; dimethylallyl diphosphate biosynthesis; dimethylallyl diphosphate from isopentenyl diphosphate: step 1/1. Functionally, catalyzes the 1,3-allylic rearrangement of the homoallylic substrate isopentenyl (IPP) to its highly electrophilic allylic isomer, dimethylallyl diphosphate (DMAPP). The chain is Isopentenyl-diphosphate Delta-isomerase from Burkholderia multivorans (strain ATCC 17616 / 249).